The primary structure comprises 209 residues: Pyrrolidone-carboxylate peptidase (209 aa).

Residues glutamate 79, cysteine 142, and histidine 164 contribute to the active site.

This sequence belongs to the peptidase C15 family. As to quaternary structure, homotetramer.

The protein localises to the cytoplasm. It catalyses the reaction Release of an N-terminal pyroglutamyl group from a polypeptide, the second amino acid generally not being Pro.. Functionally, removes 5-oxoproline from various penultimate amino acid residues except L-proline. The protein is Pyrrolidone-carboxylate peptidase of Saccharolobus islandicus (strain Y.N.15.51 / Yellowstone #2) (Sulfolobus islandicus).